We begin with the raw amino-acid sequence, 290 residues long: Transposon Ty3-G Gag polyprotein (290 aa).

Position 2 is an N-acetylserine (serine 2). The CCHC-type zinc-finger motif lies at 265 to 282 (RLCFYCKKEGHRLNECRA).

The protein localises to the cytoplasm. Its function is as follows. Capsid protein (CA) is the structural component of the virus-like particle (VLP), forming the shell that encapsulates the retrotransposons dimeric RNA genome. Nucleocapsid protein p9 (NC) forms the nucleocore that coats the retro-elements dimeric RNA. Binds these RNAs through its zinc fingers. Promotes primer tRNA(i)-Met annealing to the multipartite primer-binding site (PBS), dimerization of Ty3 RNA and initiation of reverse transcription. This is Transposon Ty3-G Gag polyprotein (TY3A-G) from Saccharomyces cerevisiae (strain ATCC 204508 / S288c) (Baker's yeast).